A 245-amino-acid polypeptide reads, in one-letter code: Nisin immunity protein (245 aa).

An N-terminal signal peptide occupies residues 1–19 (MRRYLILIVALIGITGLSG). The N-palmitoyl cysteine moiety is linked to residue cysteine 20. Cysteine 20 carries S-diacylglycerol cysteine lipidation.

It is found in the cell membrane. Functionally, involved in immunity against exogenously supplied nisin. This Lactococcus lactis subsp. lactis (Streptococcus lactis) protein is Nisin immunity protein (nisI).